Here is a 70-residue protein sequence, read N- to C-terminus: MKFLVNVALVFMVVYISFIYAAPEPEPAPEAEAEADAEADPEAGIGAVLKVLATGLPALISWIKRKRQQG.

An N-terminal signal peptide occupies residues 1–21 (MKFLVNVALVFMVVYISFIYA). A propeptide spans 22 to 43 (APEPEPAPEAEAEADAEADPEA) (removed by a dipeptidylpeptidase). Gly44 bears the N-formylglycine; partial mark. Residue Gln69 is modified to Glutamine amide.

The protein belongs to the melittin family. As to quaternary structure, monomer (in solution and for integration into membranes), homotetramer (in solution and potentially as a toroidal pore in membranes), and potenially homomultimer (as a toroidal pore in membranes). Expressed by the venom gland.

The protein resides in the secreted. It localises to the target cell membrane. Main toxin of bee venom with strong hemolytic activity and antimicrobial activity. It has enhancing effects on bee venom phospholipase A2 activity. This amphipathic toxin binds to negatively charged membrane surface and forms pore by inserting into lipid bilayers inducing the leakage of ions and molecules and the enhancement of permeability that ultimately leads to cell lysis. It acts as a voltage-gated pore with higher selectivity for anions over cations. The ion conductance has been shown to be voltage-dependent. Self-association of melittin in membranes is promoted by high ionic strength, but not by the presence of negatively charged lipids. In vivo, intradermal injection into healthy human volunteers produce sharp pain sensation and an inflammatory response. It produces pain by activating primary nociceptor cells directly and indirectly due to its ability to activate plasma membrane phospholipase A2 and its pore-forming activity. The polypeptide is Melittin (MELT) (Polistes hebraeus (Paper wasp)).